The primary structure comprises 77 residues: Large ribosomal subunit protein bL28 (77 aa).

This sequence belongs to the bacterial ribosomal protein bL28 family.

In Variovorax paradoxus (strain S110), this protein is Large ribosomal subunit protein bL28.